The following is a 1164-amino-acid chain: Phospholipid-transporting ATPase IA (1164 aa).

Topologically, residues 1-75 (MPTMRRTVSE…PRFLYSQFRR (75 aa)) are cytoplasmic. Ser25 is subject to Phosphoserine. Position 28 is a phosphothreonine (Thr28). At Ser29 the chain carries Phosphoserine. Residues 76–96 (AANSFFLFIALLQQIPDVSPT) traverse the membrane as a helical segment. Residues 97-100 (GRYT) lie on the Exoplasmic loop side of the membrane. The chain crosses the membrane as a helical span at residues 101–121 (TLVPLLFILAVAAIKEIIEDI). Residues 122–297 (KRHKADNAVN…SNVERITNVQ (176 aa)) are Cytoplasmic-facing. Residues 298–318 (ILILFCILIAMSLVCSVGSAI) traverse the membrane as a helical segment. Over 319 to 339 (WNRRHSGKDWYLHLHYGGASN) the chain is Exoplasmic loop. Residues 340–360 (FGLNFLTFIILFNNLIPISLL) form a helical membrane-spanning segment. Topologically, residues 361–866 (VTLEVVKFTQ…KCILYCFYKN (506 aa)) are cytoplasmic. Asp409 serves as the catalytic 4-aspartylphosphate intermediate. The ATP site is built by Asp409, Lys410, and Thr411. Position 409 (Asp409) interacts with Mg(2+). Residue Thr411 participates in Mg(2+) binding. The residue at position 443 (Ser443) is a Phosphoserine. ATP-binding positions include Glu508, Phe549, Lys572, Arg605, Thr685, Gly686, Asp687, 741 to 748 (ALIIDGKT), Arg775, and Lys781. Asp801 lines the Mg(2+) pocket. ATP-binding residues include Asn804 and Asp805. Asp805 serves as a coordination point for Mg(2+). Residues 867 to 887 (IVLYIIEIWFAFVNGFSGQIL) traverse the membrane as a helical segment. Topologically, residues 888–890 (FER) are exoplasmic loop. The chain crosses the membrane as a helical span at residues 891-911 (WCIGLYNVMFTAMPPLTLGIF). At 912 to 939 (ERSCRKENMLKYPELYKTSQNALDFNTK) the chain is on the cytoplasmic side. A helical transmembrane segment spans residues 940-960 (VFWVHCLNGLFHSVILFWFPL). The Exoplasmic loop portion of the chain corresponds to 961–977 (KALQYGTVFGNGKTSDY). Residues 978–998 (LLLGNFVYTFVVITVCLKAGL) form a helical membrane-spanning segment. Residues 999-1008 (ETSYWTWFSH) are Cytoplasmic-facing. Residues 1009-1029 (IAIWGSIALWVVFFGIYSSLW) traverse the membrane as a helical segment. Topologically, residues 1030 to 1044 (PAVPMAPDMSGEAAM) are exoplasmic loop. Residues 1045–1065 (LFSSGVFWVGLLSIPVASLLL) traverse the membrane as a helical segment. Over 1066-1164 (DVLYKVIKRT…DTTKQRPDEW (99 aa)) the chain is Cytoplasmic. 1095–1102 (GAVVLGKS) contributes to the ATP binding site. Ser1126 carries the phosphoserine modification.

It belongs to the cation transport ATPase (P-type) (TC 3.A.3) family. Type IV subfamily. Component of a P4-ATPase flippase complex which consists of a catalytic alpha subunit and an accessory beta subunit. Interacts with TMEM30A to form a flippase complex; this complex forms an intermediate phosphoenzyme. Interacts with TMEM30B; this interaction is reported conflictingly. Mg(2+) is required as a cofactor. In terms of processing, cleaved by calpain in a caspase- and calcium influx-dependent manner only during platelet apoptosis and may lead to inactivation. In terms of tissue distribution, found in most tissues except liver and testis. Most abundant in brain and lung. Also detected in fetal tissues. Isoform 1 is expressed in brain. Isoform 2 and isoform 3 are expressed in reticulocytes. Expressed in mouse hippocampus in both dentate gyrus (DG) and the CA3 regions. Expressed in both neuronal as well as non-neuronal cells within the DG. Highly expressed in platelets.

It is found in the cytoplasmic vesicle. The protein resides in the secretory vesicle. Its subcellular location is the chromaffin granule membrane. It localises to the cytoplasmic granule. The protein localises to the cell membrane. It is found in the endoplasmic reticulum. The protein resides in the golgi apparatus. Its subcellular location is the endomembrane system. The catalysed reaction is ATP + H2O + phospholipidSide 1 = ADP + phosphate + phospholipidSide 2.. The enzyme catalyses a 1,2-diacyl-sn-glycero-3-phospho-L-serine(out) + ATP + H2O = a 1,2-diacyl-sn-glycero-3-phospho-L-serine(in) + ADP + phosphate + H(+). Its activity is regulated as follows. ATPase activity is stimulated by phosphatidylserine (PS) and minimally by phosphatidylethanolamine (PE). ATPase activity is inhibited by the vanadate and by the presence of calcium. Its function is as follows. Catalytic component of a P4-ATPase flippase complex which catalyzes the hydrolysis of ATP coupled to the transport of aminophospholipids from the outer to the inner leaflet of various membranes and ensures the maintenance of asymmetric distribution of phospholipids. Phospholipid translocation also seems to be implicated in vesicle formation and in uptake of lipid signaling molecules. In vitro, its ATPase activity is selectively and stereospecifically stimulated by phosphatidylserine (PS). The flippase complex ATP8A1:TMEM30A seems to play a role in regulation of cell migration probably involving flippase-mediated translocation of phosphatidylethanolamine (PE) at the cell membrane. Acts as aminophospholipid translocase at the cell membrane in neuronal cells; the activity is associated with hippocampus-dependent learning. May play a role in brain connectivity. The protein is Phospholipid-transporting ATPase IA of Mus musculus (Mouse).